The sequence spans 504 residues: Putative F-box/FBD/LRR-repeat protein At3g59240 (504 aa).

An F-box domain is found at lysine 7–serine 60. LRR repeat units lie at residues histidine 69–cysteine 95, arginine 145–serine 171, tryptophan 173–aspartate 198, threonine 286–cysteine 312, aspartate 329–glycine 354, cysteine 369–glutamate 396, and aspartate 403–tyrosine 428. One can recognise an FBD domain in the interval serine 382–histidine 427.

This Arabidopsis thaliana (Mouse-ear cress) protein is Putative F-box/FBD/LRR-repeat protein At3g59240.